Consider the following 119-residue polypeptide: Putative ankyrin repeat domain-containing protein 26-like 1 (119 aa).

Residues glutamate 15–lysine 112 are a coiled coil.

The sequence is that of Putative ankyrin repeat domain-containing protein 26-like 1 (ANKRD36BP1) from Homo sapiens (Human).